A 403-amino-acid chain; its full sequence is G2/mitotic-specific cyclin-B3 (403 aa).

Disordered stretches follow at residues 1–86 (MPVA…APPA) and 102–122 (RKTP…PEEP). Residues 7–25 (SKAQSSKQPRASKAPSVTE) are compositionally biased toward polar residues. The D-box motif lies at 51-59 (RSAFGDITN).

It belongs to the cyclin family. Cyclin AB subfamily. Interacts with the CDK1 and CDK2 protein kinases. Ubiquitinated, leading to its degradation.

It localises to the nucleus. Cyclins are positive regulatory subunits of the cyclin-dependent kinases (CDKs), and thereby play an essential role in the control of the cell cycle, notably via their destruction during cell division. Could be involved at the G2/M (mitosis or meiosis) transition. G2/M cyclins accumulate steadily during G2 and are abruptly destroyed at mitosis. The polypeptide is G2/mitotic-specific cyclin-B3 (CCNB3) (Gallus gallus (Chicken)).